Here is a 237-residue protein sequence, read N- to C-terminus: tRNA(His) guanylyltransferase (237 aa).

Residues Asp-29, Gly-30, and Asp-77 each contribute to the Mg(2+) site. GTP is bound by residues 29–34 (DGKKFH) and 76–77 (SD).

Belongs to the tRNA(His) guanylyltransferase family. The cofactor is Mg(2+).

The catalysed reaction is a 5'-end ribonucleotide-tRNA(His) + GTP + ATP + H2O = a 5'-end phospho-guanosine-ribonucleotide-tRNA(His) + AMP + 2 diphosphate + H(+). In terms of biological role, adds a GMP to the 5'-end of tRNA(His) after transcription and RNase P cleavage. This Candida glabrata (strain ATCC 2001 / BCRC 20586 / JCM 3761 / NBRC 0622 / NRRL Y-65 / CBS 138) (Yeast) protein is tRNA(His) guanylyltransferase (THG1).